A 492-amino-acid chain; its full sequence is Metal cation symporter ZIP14 (492 aa).

The first 30 residues, 1–30 (MKLLLLHPAFQSCLLLTLLGLWRTTPEAHA), serve as a signal peptide directing secretion. Topologically, residues 31–157 (SSLGAPAISA…PSAVEVWGYG (127 aa)) are extracellular. Residues N77, N87, and N102 are each glycosylated (N-linked (GlcNAc...) asparagine). The chain crosses the membrane as a helical span at residues 158 to 178 (LLCVTVISLCSLLGASVVPFM). Over 179-186 (KKTFYKRL) the chain is Cytoplasmic. A helical transmembrane segment spans residues 187-207 (LLYFIALAIGTLYSNALFQLI). Over 208-224 (PEAFGFNPLEDYYVSKS) the chain is Extracellular. A helical membrane pass occupies residues 225 to 245 (AVVFGGFYLFFFTEKILKILL). The Cytoplasmic segment spans residues 246-397 (KQKNEHHHGH…LLNAGMSIQQ (152 aa)). The HHHGHXHX-motif motif lies at 251-258 (HHHGHSHY). The short motif at 376 to 381 (EEFPHE) is the XEXPHE-motif element. Residues 398–418 (ALFFNFLSACCCYLGLAFGIL) form a helical membrane-spanning segment. Topologically, residues 419-424 (AGSHFS) are extracellular. Residues 425–445 (ANWIFALAGGMFLYISLADMF) form a helical membrane-spanning segment. The Cytoplasmic segment spans residues 446 to 460 (PEMNEVCQEDERKGS). A helical membrane pass occupies residues 461–481 (ILIPFIIQNLGLLTGFTIMVV). Over 482–492 (LTMYSGQIQIG) the chain is Extracellular.

It belongs to the ZIP transporter (TC 2.A.5) family. Homotrimer. Ubiquitinated. Ubiquitination occurs upon iron depletion. The ubiquitinated form undergoes proteasomal degradation. In terms of processing, N-glycosylated. N-glycosylation at Asn-102 is required for iron-regulated extraction of the transporter from membranes and subsequent proteasomal degradation. As to expression, ubiquitously expressed, with higher expression in liver, pancreas, fetal liver, thyroid gland, left and right ventricle, right atrium and fetal heart. Weakly expressed in spleen, thymus, and peripheral blood leukocytes. Expressed in liver and in brain by large neurons in the globus pallidus, the insular cortex and the dentate nucleus and to a lower extent in the putamen and the caudate nucleus (at protein level). Expressed in osteoblasts and giant osteoclast-like cells, but not in osteocytes found osteoblastoma and giant cell tumors (at protein level). Expressed by microvascular capillary endothelial cells that constitute the blood-brain barrier (at protein level). Expressed by macrophages. In terms of tissue distribution, widely expressed but not detected in brain, heart, skeletal muscle, placenta and fetal skin.

The protein resides in the cell membrane. Its subcellular location is the apical cell membrane. The protein localises to the basolateral cell membrane. It is found in the early endosome membrane. It localises to the late endosome membrane. The protein resides in the lysosome membrane. The catalysed reaction is Zn(2+)(out) + 2 hydrogencarbonate(out) = Zn(2+)(in) + 2 hydrogencarbonate(in). It carries out the reaction Mn(2+)(out) + 2 hydrogencarbonate(out) = Mn(2+)(in) + 2 hydrogencarbonate(in). It catalyses the reaction Fe(2+)(out) + 2 hydrogencarbonate(out) = Fe(2+)(in) + 2 hydrogencarbonate(in). The enzyme catalyses Cd(2+)(out) + 2 hydrogencarbonate(out) = Cd(2+)(in) + 2 hydrogencarbonate(in). Functionally, electroneutral transporter of the plasma membrane mediating the cellular uptake of the divalent metal cations zinc, manganese and iron that are important for tissue homeostasis, metabolism, development and immunity. Functions as an energy-dependent symporter, transporting through the membranes an electroneutral complex composed of a divalent metal cation and two bicarbonate anions. Beside these endogenous cellular substrates, can also import cadmium a non-essential metal which is cytotoxic and carcinogenic. Controls the cellular uptake by the intestinal epithelium of systemic zinc, which is in turn required to maintain tight junctions and the intestinal permeability. Modifies the activity of zinc-dependent phosphodiesterases, thereby indirectly regulating G protein-coupled receptor signaling pathways important for gluconeogenesis and chondrocyte differentiation. Regulates insulin receptor signaling, glucose uptake, glycogen synthesis and gluconeogenesis in hepatocytes through the zinc-dependent intracellular catabolism of insulin. Through zinc cellular uptake also plays a role in the adaptation of cells to endoplasmic reticulum stress. Major manganese transporter of the basolateral membrane of intestinal epithelial cells, it plays a central role in manganese systemic homeostasis through intestinal manganese uptake. Also involved in manganese extracellular uptake by cells of the blood-brain barrier. May also play a role in manganese and zinc homeostasis participating in their elimination from the blood through the hepatobiliary excretion. Also functions in the extracellular uptake of free iron. May also function intracellularly and mediate the transport from endosomes to cytosol of iron endocytosed by transferrin. Plays a role in innate immunity by regulating the expression of cytokines by activated macrophages. The chain is Metal cation symporter ZIP14 from Homo sapiens (Human).